Consider the following 367-residue polypeptide: Phosphoribosylaminoimidazole-succinocarboxamide synthase (367 aa).

The protein belongs to the SAICAR synthetase family.

The catalysed reaction is 5-amino-1-(5-phospho-D-ribosyl)imidazole-4-carboxylate + L-aspartate + ATP = (2S)-2-[5-amino-1-(5-phospho-beta-D-ribosyl)imidazole-4-carboxamido]succinate + ADP + phosphate + 2 H(+). It functions in the pathway purine metabolism; IMP biosynthesis via de novo pathway; 5-amino-1-(5-phospho-D-ribosyl)imidazole-4-carboxamide from 5-amino-1-(5-phospho-D-ribosyl)imidazole-4-carboxylate: step 1/2. This chain is Phosphoribosylaminoimidazole-succinocarboxamide synthase, found in Vibrio vulnificus (strain CMCP6).